The primary structure comprises 727 residues: Pentatricopeptide repeat-containing protein At2g33680 (727 aa).

PPR repeat units follow at residues 13–47 (HTST…GAST), 48–78 (CIQH…IICK), 79–116 (DVVS…DILP), 117–150 (NAYT…MSSF), 152–182 (DIYV…MPER), 183–213 (NTYT…FLRE), 220–254 (SDYV…GLLG), 255–285 (FVAL…SGDR), 286–320 (NSIT…GIKP), 321–355 (SEYT…GFER), 356–386 (HLFA…LQER), 387–421 (DVAL…GIIP), 422–456 (NDPT…GFGL), 457–487 (EVPI…TPNK), 488–522 (DVVS…GMEP), 523–553 (DDVT…MSDQ), and 559–593 (KVDH…HGLC). Residues 594 to 669 (LWRILLSACK…EVGCSWIELK (76 aa)) form a type E motif region. Positions 670–700 (NQYHVFVVGDTMHPMIEETKDLVCLVSRQMI) are type E(+) motif.

Belongs to the PPR family. PCMP-E subfamily.

The chain is Pentatricopeptide repeat-containing protein At2g33680 (PCMP-E19) from Arabidopsis thaliana (Mouse-ear cress).